A 239-amino-acid polypeptide reads, in one-letter code: MPLLLLGETEPLKLERDCRSPVDPWAAASPDLALACLCHCQDLSSGAFPDRGVLGGVLFPTVEMVIKVFVATSSGSIAIRKKQQEVVGFLEANKIDFKELDIAGDEDNRRWMRENVPGEKKPQNGIPLPPQIFNEEQYCGDFDSFFSAKEENIIYSFLGLAPPPDSKGSEKAEEGGETEAQKEGSEDVGNLPEAQEKNEEEGETATEETEEIAMEGAEGEAEEEEETAEGEEPGEDEDS.

An SH3-binding motif is present at residues Asn124–Pro130. Residues Gly159–Ser239 form a disordered region. Residues Lys167–Ser185 show a composition bias toward basic and acidic residues. The span at Asn198–Ser239 shows a compositional bias: acidic residues.

Belongs to the SH3BGR family. In terms of tissue distribution, expressed in heart and skeletal muscle.

This chain is SH3 domain-binding glutamic acid-rich protein (SH3BGR), found in Homo sapiens (Human).